The following is a 798-amino-acid chain: Transferrin receptor protein 2 (798 aa).

At 1–81 the chain is on the cytoplasmic side; sequence MEQRWGLLRR…WAAAGRKAAP (81 aa). The Endocytosis signal signature appears at 23–26; sequence YRRV. A helical; Signal-anchor for type II membrane protein membrane pass occupies residues 82–102; it reads YLVLITLLIFTGAFLLGYVAF. At 103–798 the chain is on the extracellular side; sequence RGSCQACGDS…GDVWNIDNNF (696 aa). N-linked (GlcNAc...) asparagine glycans are attached at residues Asn-235, Asn-334, and Asn-535.

Belongs to the peptidase M28 family. M28B subfamily. As to expression, predominantly expressed in liver. Also expressed in kidney, spleen, brain, lung, heart and muscle with very low expression in kidney, muscle and heart.

It is found in the cell membrane. It localises to the cytoplasm. Its function is as follows. Mediates cellular uptake of transferrin-bound iron in a non-iron dependent manner. May be involved in iron metabolism, hepatocyte function and erythrocyte differentiation. The protein is Transferrin receptor protein 2 (Tfr2) of Mus musculus (Mouse).